The sequence spans 155 residues: 3-hydroxyacyl-[acyl-carrier-protein] dehydratase FabZ (155 aa).

Residue H61 is part of the active site.

This sequence belongs to the thioester dehydratase family. FabZ subfamily.

Its subcellular location is the cytoplasm. The catalysed reaction is a (3R)-hydroxyacyl-[ACP] = a (2E)-enoyl-[ACP] + H2O. Functionally, involved in unsaturated fatty acids biosynthesis. Catalyzes the dehydration of short chain beta-hydroxyacyl-ACPs and long chain saturated and unsaturated beta-hydroxyacyl-ACPs. The chain is 3-hydroxyacyl-[acyl-carrier-protein] dehydratase FabZ from Synechococcus sp. (strain ATCC 27144 / PCC 6301 / SAUG 1402/1) (Anacystis nidulans).